Here is a 243-residue protein sequence, read N- to C-terminus: Small ribosomal subunit protein uS5 (243 aa).

Residues Met-1–Glu-54 form a disordered region. Positions Ala-11–Ser-24 are enriched in polar residues. The segment covering Asn-26–Glu-54 has biased composition (basic and acidic residues). The S5 DRBM domain occupies Met-57–Val-120.

It belongs to the universal ribosomal protein uS5 family. Part of the 30S ribosomal subunit. Contacts proteins S4 and S8.

In terms of biological role, with S4 and S12 plays an important role in translational accuracy. Functionally, located at the back of the 30S subunit body where it stabilizes the conformation of the head with respect to the body. The sequence is that of Small ribosomal subunit protein uS5 from Bifidobacterium animalis subsp. lactis (strain AD011).